Reading from the N-terminus, the 511-residue chain is Sporulation-specific chitinase 2 (511 aa).

A signal peptide spans 1 to 34 (MVGHSAQHRSKSSLVSHLLILLIFITIIIEMCLY). The 400-residue stretch at 73 to 472 (FISGVYYSNW…NAFNEGLHFN (400 aa)) folds into the GH18 domain. A glycan (N-linked (GlcNAc...) asparagine) is linked at Asn-147. The Proton donor role is filled by Glu-223. N-linked (GlcNAc...) asparagine glycans are attached at residues Asn-228, Asn-456, and Asn-472.

Belongs to the glycosyl hydrolase 18 family. Chitinase class III subfamily.

It is found in the secreted. The catalysed reaction is Random endo-hydrolysis of N-acetyl-beta-D-glucosaminide (1-&gt;4)-beta-linkages in chitin and chitodextrins.. The sequence is that of Sporulation-specific chitinase 2 (CTS2) from Saccharomyces cerevisiae (strain ATCC 204508 / S288c) (Baker's yeast).